Here is a 270-residue protein sequence, read N- to C-terminus: Protein-ADP-ribose hydrolase (270 aa).

The 195-residue stretch at 73-267 (VSVKDCQKTN…LYDTYLQKEN (195 aa)) folds into the Macro domain. ADP-D-ribose is bound by residues D92, I93, and N106. Positions 112, 117, and 119 each coordinate Zn(2+). ADP-D-ribose is bound by residues C119, I120, D121, S212, T213, G214, E215, and F216.

Belongs to the MacroD-type family. Zn-Macro subfamily. It depends on Zn(2+) as a cofactor.

It catalyses the reaction 4-O-(ADP-D-ribosyl)-L-aspartyl-[protein] + H2O = L-aspartyl-[protein] + ADP-D-ribose + H(+). ADP-ribosylhydrolase that specifically reverses the SirTM-mediated mono-ADP-ribosylation at an asparatate residue of GcvH-L, by releasing ADP-ribose from the target protein. May play a role in the regulation of the response to host-induced oxidative stress. In Streptococcus pyogenes serotype M3 (strain ATCC BAA-595 / MGAS315), this protein is Protein-ADP-ribose hydrolase.